Consider the following 460-residue polypeptide: Argininosuccinate lyase (460 aa).

It belongs to the lyase 1 family. Argininosuccinate lyase subfamily.

Its subcellular location is the cytoplasm. It catalyses the reaction 2-(N(omega)-L-arginino)succinate = fumarate + L-arginine. It functions in the pathway amino-acid biosynthesis; L-arginine biosynthesis; L-arginine from L-ornithine and carbamoyl phosphate: step 3/3. The protein is Argininosuccinate lyase of Pelotomaculum thermopropionicum (strain DSM 13744 / JCM 10971 / SI).